An 800-amino-acid chain; its full sequence is Protein gfi-3 (800 aa).

The stretch at 346-366 (ESLQQAQLRNDEICHQMANIE) forms a coiled coil. TPR repeat units follow at residues 526 to 559 (AIGA…YPEE) and 637 to 670 (IRIH…AENT).

As to quaternary structure, the APC/C complex is probably composed of at least 12 subunits: apc-2, apc-10, apc-11, cdc-26, emb-1, emb-27, emb-30, mat-1, mat-2, mat-3, such-1 and gfi-3. Expressed in gut cells and mature sperm stored in the spermatheca.

It participates in protein modification; protein ubiquitination. Functionally, probable component of the anaphase promoting complex/cyclosome (APC/C), a cell cycle-regulated E3 ubiquitin ligase that controls progression through mitosis and the G1 phase of the cell cycle. The APC/C complex acts by mediating ubiquitination and subsequent degradation of target proteins. Required for the metaphase to anaphase transition in meiosis. The sequence is that of Protein gfi-3 from Caenorhabditis elegans.